The chain runs to 256 residues: UPF0246 protein SPO0106 (256 aa).

This sequence belongs to the UPF0246 family.

In Ruegeria pomeroyi (strain ATCC 700808 / DSM 15171 / DSS-3) (Silicibacter pomeroyi), this protein is UPF0246 protein SPO0106.